The primary structure comprises 59 residues: Ferredoxin-2 (59 aa).

2 consecutive 4Fe-4S ferredoxin-type domains span residues 3–32 (YSVI…LQNG) and 33–59 (KAVP…AIVE). [4Fe-4S] cluster-binding residues include Cys-12, Cys-15, Cys-18, Cys-22, Cys-42, Cys-45, Cys-48, and Cys-52.

As to quaternary structure, homodimer. The cofactor is [4Fe-4S] cluster.

Its subcellular location is the periplasm. In terms of biological role, ferredoxins are iron-sulfur proteins that transfer electrons in a wide variety of metabolic reactions. This is Ferredoxin-2 from Desulfomicrobium norvegicum (strain DSM 1741 / NCIMB 8310) (Desulfovibrio baculatus (strain Norway 4)).